The sequence spans 66 residues: Large ribosomal subunit protein bL35 (66 aa).

Belongs to the bacterial ribosomal protein bL35 family.

This is Large ribosomal subunit protein bL35 from Brucella melitensis biotype 1 (strain ATCC 23456 / CCUG 17765 / NCTC 10094 / 16M).